The following is a 536-amino-acid chain: MSTLEPEKRRQHEDKSNEIIDSPIFLNKISALPESENVHCLLLKQLIGSPQLKQTWQFNFCVDLNFLLENMHASVFPTVDVRITHGYDSKSDSLARLTAQMNHCPVNVKLYSVYVPMWGTHHSKIMVNFFKDDSCQIVIHTANLVEPDWIGMSQAIFKTPLLYPKANDSLSTSSVPEYGNPSKIRKHEGSLDIKDDRNCDIIDVDSAFENFKHKSDTRSSDDLGVIGRQFQQDFLAYLKNYRHTYELIEKLKMYDFSAIRAIFIGSVPGKFEGEEESSWGLGKLKKILKMLEKDSKKDEKTKFEESDICISQCSSMGSFGPKQEYIAELTDGFGCQRGNWKFLFPTVKEVQQSMLGWQSGSSIHFNILGKTAASQVETLKKGKNLCKWVAMKAGRQRVAPHIKTYMRFSNDGELLRWVLVTSANLSKPAWGTLEGHKAKSRSTRGLRIRSYEAGVLLYPKLFEESQRAPCIMTPTYKTNTPNLDEKRREFYGKRVIGVRMCWDFPPVEYEDKDEIWSPVINRTDKDWLGYVWPPNW.

The Nucleophile role is filled by His-122. Lys-124 contacts substrate. The tract at residues 315–318 is interaction with DNA; sequence SMGS. His-401 (proton donor/acceptor) is an active-site residue. Residue Lys-403 coordinates substrate.

It belongs to the tyrosyl-DNA phosphodiesterase family.

The protein resides in the nucleus. Its function is as follows. DNA repair enzyme that can remove a variety of covalent adducts from DNA through hydrolysis of a 3'-phosphodiester bond, giving rise to DNA with a free 3' phosphate. Catalyzes the hydrolysis of dead-end complexes between DNA and the topoisomerase I active site tyrosine residue. Hydrolyzes 3'-phosphoglycolates on protruding 3' ends on DNA double-strand breaks due to DNA damage by radiation and free radicals. Acts on blunt-ended double-strand DNA breaks and on single-stranded DNA. May have low 3'exonuclease activity and may be able to remove a single nucleoside from the 3'end of DNA and RNA molecules with 3'hydroxyl groups. Has no exonuclease activity towards DNA or RNA with a 3'phosphate. This is Probable tyrosyl-DNA phosphodiesterase from Schizosaccharomyces pombe (strain 972 / ATCC 24843) (Fission yeast).